A 181-amino-acid chain; its full sequence is Protein Syd (181 aa).

It belongs to the Syd family.

The protein resides in the cell inner membrane. Functionally, interacts with the SecY protein in vivo. May bind preferentially to an uncomplexed state of SecY, thus functioning either as a chelating agent for excess SecY in the cell or as a regulatory factor that negatively controls the translocase function. This Salmonella arizonae (strain ATCC BAA-731 / CDC346-86 / RSK2980) protein is Protein Syd.